The chain runs to 413 residues: EFNHTGELLATGDKGGRVVIFQREQESKNQVHRRGEYNVYSTFQSHEPEFDYLKSLEIEEKINKIRWLPQQNAAYFLLSTNDKTVKLWKVSERDKRPEGYNLKDEEGRLRDPATITTLRVPVLRPMDLMVEATPRRVFANAHTYHINSISVNSDYETYMSADDLRINLWNFEITNQSFNIVDIKPANMEELTEVITAAEFHPHHCNTFVYSSSKGTIRLCDMRASALCDRHTKFFEEPEDPSNRSFFSEIISSISDVKFSHSGRYIMTRDYLTVKVWDLNMENRPIETYQVHDYLRSKLCSLYENDCIFDKFECVWNGSDSVIMTGSYNNFFRMFDRNTKRDVTLEASRENSKPRAILKPRKVCVGGKRRKDEISVDSLDFSKKILHTAWHPSENIIAVAATNNLYIFQDKVN.

WD repeat units follow at residues Glu1–Val31, Glu57–Glu98, Ala141–Asn179, and Glu190–Arg230. Position 245 is a phosphoserine (Ser245). WD repeat units follow at residues Glu249–Glu287, Glu304–Leu345, and Asp380–Val412. Tyr265 carries the post-translational modification Phosphotyrosine. Thr268 is modified (phosphothreonine).

Belongs to the phosphatase 2A regulatory subunit B family. In terms of assembly, PP2A consists of a common heterodimeric core enzyme, composed of a 36 kDa catalytic subunit (subunit C) and a 65 kDa constant regulatory subunit (PR65 or subunit A), that associates with a variety of regulatory subunits. Proteins that associate with the core dimer include three families of regulatory subunits B (the R2/B/PR55/B55, R3/B''/PR72/PR130/PR59 and R5/B'/B56 families), the 48 kDa variable regulatory subunit, viral proteins, and cell signaling molecules. Interacts with TOMM22. Interacts with IER5 (via N- and C-terminal regions). In terms of tissue distribution, brain.

It is found in the cytoplasm. The protein resides in the cytoskeleton. It localises to the membrane. Functionally, the B regulatory subunit might modulate substrate selectivity and catalytic activity, and might also direct the localization of the catalytic enzyme to a particular subcellular compartment. The protein is Serine/threonine-protein phosphatase 2A 55 kDa regulatory subunit B beta isoform (PPP2R2B) of Oryctolagus cuniculus (Rabbit).